The following is a 200-amino-acid chain: Holliday junction branch migration complex subunit RuvA (200 aa).

The interval M1–A64 is domain I. The interval T65–A143 is domain II. Residues S144 to E154 are flexible linker. Residues E154–R200 form a domain III region.

This sequence belongs to the RuvA family. Homotetramer. Forms an RuvA(8)-RuvB(12)-Holliday junction (HJ) complex. HJ DNA is sandwiched between 2 RuvA tetramers; dsDNA enters through RuvA and exits via RuvB. An RuvB hexamer assembles on each DNA strand where it exits the tetramer. Each RuvB hexamer is contacted by two RuvA subunits (via domain III) on 2 adjacent RuvB subunits; this complex drives branch migration. In the full resolvosome a probable DNA-RuvA(4)-RuvB(12)-RuvC(2) complex forms which resolves the HJ.

Its subcellular location is the cytoplasm. Its function is as follows. The RuvA-RuvB-RuvC complex processes Holliday junction (HJ) DNA during genetic recombination and DNA repair, while the RuvA-RuvB complex plays an important role in the rescue of blocked DNA replication forks via replication fork reversal (RFR). RuvA specifically binds to HJ cruciform DNA, conferring on it an open structure. The RuvB hexamer acts as an ATP-dependent pump, pulling dsDNA into and through the RuvAB complex. HJ branch migration allows RuvC to scan DNA until it finds its consensus sequence, where it cleaves and resolves the cruciform DNA. The chain is Holliday junction branch migration complex subunit RuvA from Chlorobium phaeovibrioides (strain DSM 265 / 1930) (Prosthecochloris vibrioformis (strain DSM 265)).